The following is a 317-amino-acid chain: Polysulfide reductase chain C (317 aa).

8 helical membrane-spanning segments follow: residues 20 to 40, 54 to 75, 98 to 118, 147 to 167, 182 to 202, 221 to 237, 259 to 279, and 289 to 309; these read IAVYLFLAGLSAGAIISAIII, IIKAGALIAPLTIGAGLLLLIF, LGVLALFAYFPVVLIFLLGVF, IVTFVLAIGVGAYTGFLLSAM, FLASGISAGISGNLLIGLLFF, VILFEAFLLFILFVGMY, LFWLGVAGMGLALPVVLNVAL, and FVMLNALIVLAGVMALRFYIL.

The protein belongs to the NrfD family. Functional polysulfide reductase is made up of three different (A, B, and C) subunits.

The protein resides in the cell inner membrane. Functionally, could possibly serve as the membrane anchor of the enzyme. Its function is as follows. Component of the phosphorylative electron transport system with polysulfide as the terminal acceptor. The chain is Polysulfide reductase chain C (psrC) from Wolinella succinogenes (strain ATCC 29543 / DSM 1740 / CCUG 13145 / JCM 31913 / LMG 7466 / NCTC 11488 / FDC 602W) (Vibrio succinogenes).